We begin with the raw amino-acid sequence, 259 residues long: MALLQKTRIINSMLQDAAGKPVNFKEMAETLRDVIDSNIFVLSRRGKLLGYSINQQIENPRMKKMLEDRQFPEEYTKSLFNIPETSSNLDINSEYTAFPIENRDLFESGLTTIVPIIGGGDRLGTLILSRLQDTFKDDDLILAEYGATVVGMEILREKAEEIEEEARSKAVVQMAISSLSYSELEAIEHIFEELDGNEGLLVASKIADRVGITRSVIVNALRKLESAGVIESRSLGMKGTYIKVLNNKFLIELENLKSH.

Residues 1–155 (MALLQKTRII…GATVVGMEIL (155 aa)) form a GAF domain region. Residues 203–222 (ASKIADRVGITRSVIVNALR) constitute a DNA-binding region (H-T-H motif). S215 is modified (phosphoserine).

It belongs to the CodY family.

It localises to the cytoplasm. In terms of biological role, DNA-binding global transcriptional regulator which is involved in the adaptive response to starvation and acts by directly or indirectly controlling the expression of numerous genes in response to nutrient availability. During rapid exponential growth, CodY is highly active and represses genes whose products allow adaptation to nutrient depletion. The sequence is that of Global transcriptional regulator CodY from Bacillus pumilus (strain SAFR-032).